We begin with the raw amino-acid sequence, 158 residues long: Urease accessory protein UreE (158 aa).

This sequence belongs to the UreE family.

It is found in the cytoplasm. Its function is as follows. Involved in urease metallocenter assembly. Binds nickel. Probably functions as a nickel donor during metallocenter assembly. This is Urease accessory protein UreE from Klebsiella pneumoniae (strain 342).